The primary structure comprises 126 residues: Aspartate 1-decarboxylase (126 aa).

The active-site Schiff-base intermediate with substrate; via pyruvic acid is the serine 25. At serine 25 the chain carries Pyruvic acid (Ser). A substrate-binding site is contributed by threonine 57. Tyrosine 58 acts as the Proton donor in catalysis. 73-75 contributes to the substrate binding site; it reads GAA.

Belongs to the PanD family. Heterooctamer of four alpha and four beta subunits. Pyruvate is required as a cofactor. In terms of processing, is synthesized initially as an inactive proenzyme, which is activated by self-cleavage at a specific serine bond to produce a beta-subunit with a hydroxyl group at its C-terminus and an alpha-subunit with a pyruvoyl group at its N-terminus.

It is found in the cytoplasm. The enzyme catalyses L-aspartate + H(+) = beta-alanine + CO2. The protein operates within cofactor biosynthesis; (R)-pantothenate biosynthesis; beta-alanine from L-aspartate: step 1/1. In terms of biological role, catalyzes the pyruvoyl-dependent decarboxylation of aspartate to produce beta-alanine. This chain is Aspartate 1-decarboxylase, found in Marinomonas sp. (strain MWYL1).